A 506-amino-acid polypeptide reads, in one-letter code: Cobyric acid synthase (506 aa).

The GATase cobBQ-type domain maps to 251–448 (DITIAIVQLP…LHGLFDSDAF (198 aa)). Cys-332 serves as the catalytic Nucleophile. His-440 is an active-site residue.

It belongs to the CobB/CobQ family. CobQ subfamily.

The protein operates within cofactor biosynthesis; adenosylcobalamin biosynthesis. Functionally, catalyzes amidations at positions B, D, E, and G on adenosylcobyrinic A,C-diamide. NH(2) groups are provided by glutamine, and one molecule of ATP is hydrogenolyzed for each amidation. The sequence is that of Cobyric acid synthase from Salmonella choleraesuis (strain SC-B67).